A 404-amino-acid polypeptide reads, in one-letter code: RNA exonuclease 3 (404 aa).

Over residues 1-17 (MNNNAQNKRSLDDSNGN) the composition is skewed to polar residues. Positions 1–29 (MNNNAQNKRSLDDSNGNDTKRPKQEDPKY) are disordered. Residues 18 to 28 (DTKRPKQEDPK) are compositionally biased toward basic and acidic residues. An Exonuclease domain is found at 241-389 (VLGIDCEMGF…EDSIAAIDIV (149 aa)).

Belongs to the REXO1/REXO3 family.

It is found in the cytoplasm. The protein localises to the nucleus. In terms of biological role, 3' to 5' exoribonuclease required for proper 3' end maturation of MRP RNA and of the U5L snRNA. This chain is RNA exonuclease 3 (REX3), found in Candida albicans (strain SC5314 / ATCC MYA-2876) (Yeast).